A 423-amino-acid polypeptide reads, in one-letter code: Imidazolonepropionase (423 aa).

Residues histidine 78 and histidine 80 each contribute to the Fe(3+) site. 2 residues coordinate Zn(2+): histidine 78 and histidine 80. Residues arginine 87, tyrosine 150, and histidine 183 each coordinate 4-imidazolone-5-propanoate. Tyrosine 150 contributes to the N-formimidoyl-L-glutamate binding site. Histidine 247 contributes to the Fe(3+) binding site. Zn(2+) is bound at residue histidine 247. Position 250 (glutamate 250) interacts with 4-imidazolone-5-propanoate. Aspartate 322 serves as a coordination point for Fe(3+). Aspartate 322 contributes to the Zn(2+) binding site. Residues asparagine 324 and glycine 326 each contribute to the N-formimidoyl-L-glutamate site. Serine 327 serves as a coordination point for 4-imidazolone-5-propanoate.

This sequence belongs to the metallo-dependent hydrolases superfamily. HutI family. Zn(2+) serves as cofactor. Fe(3+) is required as a cofactor.

The protein localises to the cytoplasm. It carries out the reaction 4-imidazolone-5-propanoate + H2O = N-formimidoyl-L-glutamate. It functions in the pathway amino-acid degradation; L-histidine degradation into L-glutamate; N-formimidoyl-L-glutamate from L-histidine: step 3/3. In terms of biological role, catalyzes the hydrolytic cleavage of the carbon-nitrogen bond in imidazolone-5-propanoate to yield N-formimidoyl-L-glutamate. It is the third step in the universal histidine degradation pathway. In Bacillus mycoides (strain KBAB4) (Bacillus weihenstephanensis), this protein is Imidazolonepropionase.